We begin with the raw amino-acid sequence, 81 residues long: Insulin-like growth factor 1 (81 aa).

The propeptide occupies 1–4; that stretch reads FASA. The b stretch occupies residues 5 to 33; that stretch reads GPETLCGAELVDALQFVCGDRGFYFNKPT. 3 disulfide bridges follow: cysteine 10/cysteine 52, cysteine 22/cysteine 65, and cysteine 51/cysteine 56. Positions 34 to 45 are c; the sequence is GYGSSSRRAPQT. The segment at 46–66 is a; that stretch reads GIVDECCFRSCDLRRLEMYCA. Residues 67-74 are d; that stretch reads PLKPAKAA. The propeptide at 75–81 is e peptide; the sequence is RSVRAQR.

Belongs to the insulin family. As to quaternary structure, forms a ternary complex with IGFR1 and ITGAV:ITGB3. Forms a ternary complex with IGFR1 and ITGA6:ITGB4.

The protein localises to the secreted. In terms of biological role, the insulin-like growth factors, isolated from plasma, are structurally and functionally related to insulin but have a much higher growth-promoting activity. May be a physiological regulator of [1-14C]-2-deoxy-D-glucose (2DG) transport and glycogen synthesis in osteoblasts. Stimulates glucose transport in bone-derived osteoblastic (PyMS) cells and is effective at much lower concentrations than insulin, not only regarding glycogen and DNA synthesis but also with regard to enhancing glucose uptake. May play a role in synapse maturation. Ca(2+)-dependent exocytosis of IGF1 is required for sensory perception of smell in the olfactory bulb. Acts as a ligand for IGF1R. Binds to the alpha subunit of IGF1R, leading to the activation of the intrinsic tyrosine kinase activity which autophosphorylates tyrosine residues in the beta subunit thus initiating a cascade of down-stream signaling events leading to activation of the PI3K-AKT/PKB and the Ras-MAPK pathways. Binds to integrins ITGAV:ITGB3 and ITGA6:ITGB4. Its binding to integrins and subsequent ternary complex formation with integrins and IGFR1 are essential for IGF1 signaling. Induces the phosphorylation and activation of IGFR1, MAPK3/ERK1, MAPK1/ERK2 and AKT1. As part of the MAPK/ERK signaling pathway, acts as a negative regulator of apoptosis in cardiomyocytes via promotion of STUB1/CHIP-mediated ubiquitination and degradation of ICER-type isoforms of CREM. This is Insulin-like growth factor 1 from Suncus murinus (Asian house shrew).